The sequence spans 382 residues: RNA binding protein fox-1 homolog 1-like (382 aa).

2 disordered regions span residues Gln-34 to Pro-79 and Gly-94 to Arg-148. The segment covering Tyr-49–Pro-65 has biased composition (pro residues). A compositionally biased stretch (polar residues) spans Glu-101 to Asp-110. The 77-residue stretch at Lys-147–Ala-223 folds into the RRM domain.

Expressed during muscle development in adaxial cells, somites, cardiac precursors, finbuds and jaw muscle cells.

It is found in the nucleus. Functionally, RNA-binding protein that regulates alternative splicing events by binding to 5'-GCAUG-3' elements. Regulates alternative splicing of tissue-specific exons. This Danio rerio (Zebrafish) protein is RNA binding protein fox-1 homolog 1-like (rbfox1l).